Here is a 578-residue protein sequence, read N- to C-terminus: Keratin, type II cytoskeletal 1b (578 aa).

The tract at residues 1-163 (MSHQFSSQSA…DPEIQRIKTQ (163 aa)) is head. Omega-N-methylarginine is present on R95. The interval 164–200 (EREQIMVLNNKFASFIDKVRFLEQQNQVLQTKWELLQ) is coil 1A. The 314-residue stretch at 164-477 (EREQIMVLNN…QLLEGEESRM (314 aa)) folds into the IF rod domain. Residues 201-219 (QVNTSTGTNNLEPLLENYI) form a linker 1 region. The coil 1B stretch occupies residues 220 to 311 (GDLRRQVDLL…LFLTELSQVQ (92 aa)). A linker 12 region spans residues 312 to 335 (THISDTNVILSMDNNRSLDLDSII). The interval 336 to 474 (DAVRTQYELI…TYRQLLEGEE (139 aa)) is coil 2. The segment at 475–578 (SRMSGELQSH…TNTSHRRILE (104 aa)) is tail. R523 is subject to Omega-N-methylarginine. Over residues 547–556 (GSYGGSGRSG) the composition is skewed to gly residues. The interval 547–578 (GSYGGSGRSGRGSSRVQIIQTSTNTSHRRILE) is disordered. Over residues 562–571 (VQIIQTSTNT) the composition is skewed to polar residues.

This sequence belongs to the intermediate filament family. In terms of processing, undergoes deimination of some arginine residues (citrullination). Expressed exclusively in skin.

The chain is Keratin, type II cytoskeletal 1b (KRT77) from Homo sapiens (Human).